The primary structure comprises 236 residues: Phosphoribosylaminoimidazole-succinocarboxamide synthase (236 aa).

Belongs to the SAICAR synthetase family.

It catalyses the reaction 5-amino-1-(5-phospho-D-ribosyl)imidazole-4-carboxylate + L-aspartate + ATP = (2S)-2-[5-amino-1-(5-phospho-beta-D-ribosyl)imidazole-4-carboxamido]succinate + ADP + phosphate + 2 H(+). Its pathway is purine metabolism; IMP biosynthesis via de novo pathway; 5-amino-1-(5-phospho-D-ribosyl)imidazole-4-carboxamide from 5-amino-1-(5-phospho-D-ribosyl)imidazole-4-carboxylate: step 1/2. The sequence is that of Phosphoribosylaminoimidazole-succinocarboxamide synthase from Coprothermobacter proteolyticus (strain ATCC 35245 / DSM 5265 / OCM 4 / BT).